The following is a 257-amino-acid chain: Acetylglutamate kinase (257 aa).

Substrate is bound by residues 43 to 44 (GG), R65, and N157. ATP-binding positions include 180 to 185 (DVSGIL) and 208 to 210 (IIT).

Belongs to the acetylglutamate kinase family. ArgB subfamily. As to quaternary structure, homodimer.

The protein resides in the cytoplasm. It carries out the reaction N-acetyl-L-glutamate + ATP = N-acetyl-L-glutamyl 5-phosphate + ADP. The protein operates within amino-acid biosynthesis; L-arginine biosynthesis; N(2)-acetyl-L-ornithine from L-glutamate: step 2/4. Functionally, catalyzes the ATP-dependent phosphorylation of N-acetyl-L-glutamate. The chain is Acetylglutamate kinase from Salmonella agona (strain SL483).